The following is a 571-amino-acid chain: Quinone-dependent D-lactate dehydrogenase (571 aa).

Positions 44–273 (GGGPVFAVVR…FAVRTRTFPR (230 aa)) constitute an FAD-binding PCMH-type domain. FAD contacts are provided by residues 78–82 (ASNTG), 86–87 (GS), Gly145, Ser152, Gly162, and Val263.

It belongs to the quinone-dependent D-lactate dehydrogenase family. The cofactor is FAD.

It is found in the cell membrane. The catalysed reaction is (R)-lactate + a quinone = a quinol + pyruvate. In terms of biological role, catalyzes the oxidation of D-lactate to pyruvate. Also has weak activity with L-lactate and DL-2-hydroxybutyrate. Electrons derived from D-lactate oxidation enter the electron transport chain. Essential for growth with D-lactate as sole carbon and energy source. The protein is Quinone-dependent D-lactate dehydrogenase of Corynebacterium glutamicum (strain ATCC 13032 / DSM 20300 / JCM 1318 / BCRC 11384 / CCUG 27702 / LMG 3730 / NBRC 12168 / NCIMB 10025 / NRRL B-2784 / 534).